The sequence spans 1457 residues: ABC transporter G family member 36 (1457 aa).

Residues 14–43 (RLGGSMRGDSGSMWRRGDDVFSRSSREEDD) are disordered. Residues 28-39 (RRGDDVFSRSSR) are compositionally biased toward basic and acidic residues. The 274-residue stretch at 164–437 (GNALGILPNR…FESTGFKCPD (274 aa)) folds into the ABC transporter 1 domain. An ATP-binding site is contributed by 197 to 204 (GPPGSGKT). The 214-residue stretch at 515 to 728 (ELLKANIDRE…AQNAISVNEL (214 aa)) folds into the ABC transmembrane type-2 1 domain. The next 7 helical transmembrane spans lie at 533–553 (FVYM…MTLF), 565–585 (SGGI…FNGF), 621–641 (IPIT…VIGF), 653–673 (LLML…GGAA), 677–697 (IVAN…GGFI), 706–726 (WWIW…ISVN), and 765–785 (IGFG…TLAL). Residues 821–841 (SSGSTRRPMGNGTENDSTIVD) are disordered. In terms of domain architecture, ABC transporter 2 spans 860 to 1112 (LSFDNVRYSV…ELIKYFESIP (253 aa)). An ATP-binding site is contributed by 905–912 (GVSGAGKT). The region spanning 1185 to 1399 (TQCMACLWKQ…TLYGLVVSQF (215 aa)) is the ABC transmembrane type-2 2 domain. 7 consecutive transmembrane segments (helical) span residues 1209 to 1229 (FFFT…LGGK), 1244 to 1264 (YAAV…VVAV), 1292 to 1312 (IPYT…MIGF), 1319 to 1339 (FFWY…YGMM), 1349 to 1369 (IASI…GFVI), 1380 to 1400 (WYCW…SQFG), and 1429 to 1449 (WVAT…GFAI).

Belongs to the ABC transporter superfamily. ABCG family. PDR (TC 3.A.1.205) subfamily.

It localises to the membrane. May be a general defense protein. This Oryza sativa subsp. indica (Rice) protein is ABC transporter G family member 36.